Reading from the N-terminus, the 112-residue chain is UPF0102 protein Pmob_0702 (112 aa).

The protein belongs to the UPF0102 family.

This Petrotoga mobilis (strain DSM 10674 / SJ95) protein is UPF0102 protein Pmob_0702.